Consider the following 214-residue polypeptide: Immunoglobulin lambda-like polypeptide 5 (214 aa).

The first 35 residues, 1–35, serve as a signal peptide directing secretion; sequence MRPKTGQVGCETPEELGPGPRQRWPLLLLGLAMVA. A j region region spans residues 98–109; the sequence is VFGTGTKVTVLG. The c region stretch occupies residues 110–214; sequence QPKANPTVTL…EKTVAPTECS (105 aa). The Ig-like C1-type domain maps to 115–209; sequence PTVTLFPPSS…EGSTVEKTVA (95 aa). A disulfide bridge links Cys-136 with Cys-195.

As to expression, contrary to IGLL1, not expressed in pre-B-cells.

Its subcellular location is the secreted. The polypeptide is Immunoglobulin lambda-like polypeptide 5 (IGLL5) (Homo sapiens (Human)).